Reading from the N-terminus, the 106-residue chain is Large ribosomal subunit protein eL42 (106 aa).

A compositionally biased stretch (basic residues) spans 1 to 29; it reads MVNIPKTRRTYCKGKACRKHTPHKVTQYK. The interval 1–56 is disordered; the sequence is MVNIPKTRRTYCKGKACRKHTPHKVTQYKKGKDSLSAQGKRRYDRKQSGYGGQTKP.

The protein belongs to the eukaryotic ribosomal protein eL42 family.

The protein is Large ribosomal subunit protein eL42 (RPL44) of Cryptococcus neoformans var. neoformans serotype D (strain B-3501A) (Filobasidiella neoformans).